A 217-amino-acid polypeptide reads, in one-letter code: Gas vesicle protein F2 (217 aa).

It belongs to the gas vesicle GvpF/GvpL family. In terms of assembly, binds GvpA.

The protein localises to the gas vesicle. The protein resides in the cytoplasm. Functionally, a minor component of the gas vesicle, may be involved in preventing GvpA aggregation during gas vesicle nucleation. Gas vesicles are hollow, gas filled proteinaceous nanostructures found in several microbial planktonic microorganisms. They allow positioning of halobacteria at the optimal depth for growth in the poorly aerated, shallow brine pools of their habitat. In terms of biological role, expression of 2 c-vac DNA fragments containing 2 divergently transcribed regions (gvpE-gvpF-gvpG-gvpH-gvpI-gvpJ-gvpK-gvpL-gvpM and gvpA-gvpC-gvpN-gvpO) allows H.volcanii to produce gas vesicles. Note that gvpD is not necessary for gas vesicle formation. The sequence is that of Gas vesicle protein F2 from Halobacterium salinarum (strain ATCC 700922 / JCM 11081 / NRC-1) (Halobacterium halobium).